An 878-amino-acid chain; its full sequence is Phosphoenolpyruvate carboxylase (878 aa).

Residues H137 and K545 contribute to the active site.

This sequence belongs to the PEPCase type 1 family. Mg(2+) is required as a cofactor.

The enzyme catalyses oxaloacetate + phosphate = phosphoenolpyruvate + hydrogencarbonate. Functionally, forms oxaloacetate, a four-carbon dicarboxylic acid source for the tricarboxylic acid cycle. This is Phosphoenolpyruvate carboxylase from Photorhabdus laumondii subsp. laumondii (strain DSM 15139 / CIP 105565 / TT01) (Photorhabdus luminescens subsp. laumondii).